We begin with the raw amino-acid sequence, 314 residues long: ATP synthase gamma chain (314 aa).

It belongs to the ATPase gamma chain family. In terms of assembly, F-type ATPases have 2 components, CF(1) - the catalytic core - and CF(0) - the membrane proton channel. CF(1) has five subunits: alpha(3), beta(3), gamma(1), delta(1), epsilon(1). CF(0) has three main subunits: a, b and c.

It localises to the cellular thylakoid membrane. Its function is as follows. Produces ATP from ADP in the presence of a proton gradient across the membrane. The gamma chain is believed to be important in regulating ATPase activity and the flow of protons through the CF(0) complex. The protein is ATP synthase gamma chain of Synechococcus sp. (strain JA-3-3Ab) (Cyanobacteria bacterium Yellowstone A-Prime).